Here is a 239-residue protein sequence, read N- to C-terminus: Serine protease SplF (239 aa).

Positions 1 to 36 (MNKNIIIKSIAALTILTSITGVGTTVVDGIQQTAKA) are cleaved as a signal peptide. Catalysis depends on charge relay system residues His75, Asp114, and Ser192.

The protein belongs to the peptidase S1B family.

Its subcellular location is the secreted. The protein is Serine protease SplF (splF) of Staphylococcus aureus (strain JH9).